The primary structure comprises 82 residues: Diphthamide biosynthesis protein 3 (82 aa).

The region spanning 8–64 is the DPH-type MB domain; it reads IYDEVEIEDMTYDPALQTYSYPCPCGDKFEIALADLQDGQDIAVCPSCSLMVRVIFE. Fe cation is bound by residues C30, C32, C52, and C55.

This sequence belongs to the DPH3 family. In terms of assembly, component of the 2-(3-amino-3-carboxypropyl)histidine synthase complex composed of dph-1, dph-2, dph-3 and a NADH-dependent reductase, predominantly cbr-1. The cofactor is Fe(2+).

It is found in the cytoplasm. Its subcellular location is the nucleus. It catalyses the reaction [3Fe-4S](1+)-[protein] + Fe(2+)-[Dph3] = [3Fe-4S](0)-[protein] + Fe(3+)-[Dph3]. The enzyme catalyses 2 [3Fe-4S](0)-[protein] + 2 Fe(2+)-[Dph3] + NADH = 2 [4Fe-4S](1+)-[protein] + 2 [Dph3] + NAD(+) + H(+). Its pathway is protein modification; peptidyl-diphthamide biosynthesis. In terms of biological role, required for the first step of diphthamide biosynthesis, a post-translational modification of histidine which occurs in elongation factor 2. Dph-1 and dph-2 transfer a 3-amino-3-carboxypropyl (ACP) group from S-adenosyl-L-methionine (SAM) to a histidine residue, the reaction is assisted by a reduction system comprising dph-3 and a NADH-dependent reductase, predominantly cbr-1. Acts as an electron donor to reduce the Fe-S cluster in dph1-dph2 keeping the [4Fe-4S] clusters in the active and reduced state. Restores iron to dph-1-dph-2 iron-sulfur clusters which have degraded from [4Fe-4S] to [3Fe-4S] by donating an iron atom to reform [4Fe-4S] clusters, in a manner dependent on the presence of elongation factor 2 and SAM. Associates with the elongator complex and is required for tRNA Wobble base modifications mediated by the elongator complex. The elongator complex is required for multiple tRNA modifications, including mcm5U (5-methoxycarbonylmethyl uridine), mcm5s 2U (5-methoxycarbonylmethyl-2-thiouridine), and ncm5U (5-carbamoylmethyl uridine). This Neurospora crassa (strain ATCC 24698 / 74-OR23-1A / CBS 708.71 / DSM 1257 / FGSC 987) protein is Diphthamide biosynthesis protein 3 (dph-3).